The primary structure comprises 221 residues: UPF0502 protein PLES_16071 (221 aa).

Belongs to the UPF0502 family.

This is UPF0502 protein PLES_16071 from Pseudomonas aeruginosa (strain LESB58).